A 462-amino-acid polypeptide reads, in one-letter code: Cysteine--tRNA ligase (462 aa).

Position 24 (Cys24) interacts with Zn(2+). A 'HIGH' region motif is present at residues 26–36 (PTVYDDAHLGH). Positions 199, 224, and 228 each coordinate Zn(2+). The 'KMSKS' region signature appears at 256-260 (KMSKS). Lys259 is a binding site for ATP.

Belongs to the class-I aminoacyl-tRNA synthetase family. In terms of assembly, monomer. Zn(2+) serves as cofactor.

Its subcellular location is the cytoplasm. It catalyses the reaction tRNA(Cys) + L-cysteine + ATP = L-cysteinyl-tRNA(Cys) + AMP + diphosphate. The chain is Cysteine--tRNA ligase from Campylobacter jejuni subsp. jejuni serotype O:23/36 (strain 81-176).